We begin with the raw amino-acid sequence, 537 residues long: MEGLLSVALQGAELEGNWKHEGQVEDLQENQESCPEPEAVACKGDPAGDSMQERDEFSRIPRTISSPAATQASVPDDSSSRRCSAPGESPKERHPDSRQRERGGGPKKPWKCGDCGKAFSYCSAFILHQRIHTGEKPFACPECGKAFSQSVHLTLHQRTHTGEKPYACHECGKAFSQGSYLASHWRTHTGEKPHRCADCGKAFTRVTHLTQHRRVHTGERPYACAQCAKAFRNRSSLIEHQRIHTGEKPYECSACAKAFRFSSALIRHQRIHTEEKPYRCGQCAKAFAQIAHLTQHRRVHTGEKPYTCQDCGALFSQSASLAEHRRIHTGEKPYACGQCAKAFTQVSHLTQHQRTHTGERPYPCHDCGKRFSNRSHLLQHRLVHTGERPYRCLQCGAAFSHVSSLIEHQKIHTGERPYKCGECGKAFSQGSSLALHQRTHTGERPYTCPECGKAFSNRSYLIQHHIVHTGEKPYECSGCGKAFSFSSALIRHQRTHADSSGRLCPAPTPDSTPGLSQGGETCQQGCPGRNPRGPAED.

Residues 12–109 (AELEGNWKHE…RERGGGPKKP (98 aa)) are disordered. Over residues 63-77 (TISSPAATQASVPDD) the composition is skewed to polar residues. The span at 89-104 (SPKERHPDSRQRERGG) shows a compositional bias: basic and acidic residues. 14 consecutive C2H2-type zinc fingers follow at residues 110–132 (WKCGDCGKAFSYCSAFILHQRIH), 138–160 (FACPECGKAFSQSVHLTLHQRTH), 166–188 (YACHECGKAFSQGSYLASHWRTH), 194–216 (HRCADCGKAFTRVTHLTQHRRVH), 222–244 (YACAQCAKAFRNRSSLIEHQRIH), 250–272 (YECSACAKAFRFSSALIRHQRIH), 278–300 (YRCGQCAKAFAQIAHLTQHRRVH), 306–328 (YTCQDCGALFSQSASLAEHRRIH), 334–356 (YACGQCAKAFTQVSHLTQHQRTH), 362–384 (YPCHDCGKRFSNRSHLLQHRLVH), 390–412 (YRCLQCGAAFSHVSSLIEHQKIH), 418–440 (YKCGECGKAFSQGSSLALHQRTH), 446–468 (YTCPECGKAFSNRSYLIQHHIVH), and 474–496 (YECSGCGKAFSFSSALIRHQRTH). The disordered stretch occupies residues 497–537 (ADSSGRLCPAPTPDSTPGLSQGGETCQQGCPGRNPRGPAED). Residues 509–524 (PDSTPGLSQGGETCQQ) show a composition bias toward polar residues.

This sequence belongs to the krueppel C2H2-type zinc-finger protein family.

The protein resides in the nucleus. In terms of biological role, may be involved in transcriptional regulation. The chain is Zinc finger protein 835 (ZNF835) from Homo sapiens (Human).